The following is a 142-amino-acid chain: MVLTAGDKANVKTVWSKVGSHLEDYGSETLERLFVVYPSTKTYFPHFDLHHDSPQVRAHGKKVLSALGEAVNHIDDIPGALSKLSDLHAQNLRVDPVNFKLLNLCFVVVVGRHHPTILTPEVHVSLDKFLSAVAQNLTSKYR.

The region spanning 2-142 (VLTAGDKANV…VAQNLTSKYR (141 aa)) is the Globin domain. His59 contributes to the O2 binding site. His88 provides a ligand contact to heme b.

This sequence belongs to the globin family. In terms of assembly, tetramer of alpha-1, alpha-2 and two identical beta chains. Red blood cells.

Involved in oxygen transport from the lung to the various peripheral tissues. This Aldabrachelys gigantea (Aldabra giant tortoise) protein is Hemoglobin A subunit alpha-2.